Here is a 242-residue protein sequence, read N- to C-terminus: Methylthioribulose-1-phosphate dehydratase (242 aa).

The tract at residues 1–22 (MAAASGHGLELANGGDATQDKL) is disordered. Residue Cys-97 participates in substrate binding. Residues His-115 and His-117 each coordinate Zn(2+). The active-site Proton donor/acceptor is Glu-139. His-195 serves as a coordination point for Zn(2+).

The protein belongs to the aldolase class II family. MtnB subfamily. It depends on Zn(2+) as a cofactor.

It localises to the cytoplasm. The enzyme catalyses 5-(methylsulfanyl)-D-ribulose 1-phosphate = 5-methylsulfanyl-2,3-dioxopentyl phosphate + H2O. The protein operates within amino-acid biosynthesis; L-methionine biosynthesis via salvage pathway; L-methionine from S-methyl-5-thio-alpha-D-ribose 1-phosphate: step 2/6. Its function is as follows. Catalyzes the dehydration of methylthioribulose-1-phosphate (MTRu-1-P) into 2,3-diketo-5-methylthiopentyl-1-phosphate (DK-MTP-1-P). Functions in the methionine salvage pathway. May play a role in apoptosis. In Gallus gallus (Chicken), this protein is Methylthioribulose-1-phosphate dehydratase.